The sequence spans 1188 residues: MESGGVETTRQGKTESLQYAVGPMAYVYARSNLTIDPEEWGLLCAKSSDQPSTAVAPLIPGLTVEEAFNTSIAAIIATKSSGMVGGAASAILSPCHFSPSVYVFYGGERINATSLAPGLTALCDEARTKFGFSSPPPGGPVSNAKETSGETICAALDMDPETTMLYLVVAEPFCEAVYMCNTFLHFGGADSVYINSEFVRRVPIYPVQMYMPDIALRLCRNPFDTNSRNIGEGCAYPKPLYNKSLNRVLHGAVLAPQGQSLRTRDLEAVARAATAVAFDGNFEGCVLAADKTFTQPATPQAKSAAQKPQADVERRAACSLAADLALTTRVSVSCAPYKFEGNASAPYCQWPMFCDAKTPDERAAALSKFMAELAGIVGAGFFAVNSPLYASEVVDGGAAADPGDKHASSNLTRFFFACGLHTLGCPTVDYAGNRVSDGTGDCALASASGFEYGPEHLAYACGFSPELTARALFYLERCSRYQLGADCRGGANTLKFVAAETTMAAECRWCTETTRQYCVRHTLHRLRSRLPTPRAPRRGPMAVFGAVDAEYTDCDQLGNFAPYSHMKRAGEGDSARNVMNDTYRGLCGRVMQFLVSEGLVRADTGEDARNIQSAKDLCDTYDRISNMVDEECAKFIAALSGARGYHYKEHLASSAHTFAVSLNPYSTSFCPMLSHLVTQTKSIILQDLILSQVPSTFDKGQPETKMFRSAAMPTLRSAFMGMLDKGFVSGRQEPVVVSASSVTAPDTSVPSTEKSVAQYEYSLTRGQVLKLKEFKVKNRIVFNGFEGRRGGVRMQGMADSFSRPASVKHINILGGPLGFLLKRYHEMIFGPENNVFQFWNKVIGGTMPMSHLTPEIRKTLNYIRRVSKAYAESNYVKAQPQTILELANFMVTNKILEYCGHGGTNGSFYISTPSAAVMSATRNKDPSAELAWLPAVANPTTKNLTEAAEKSIASEPEKNWVSTSMVTNACRLVMGTKPIIGLGIMVSKYIGQQSSTTVFQAGNWSGFMGASGIQSVNAGLSGDTTRKCMLACKRTGALIKAGPSSSFTESSLAGQVRSMVEAGCTPHAIYAVALRVLGEGLRDVTTDTWVAIVEDRFLIEALEELHAQIAASTPNGWTHEAAMAELNKHGNEEVATDGEMLNFDCDDDDADKDAPHGAKSDVPNGDDEDVFAGPSAKKRTLATEILFC.

Positions F838–W839 match the Required for filament formation motif. Residues C1145–S1175 are disordered. Positions D1166–C1188 are required for nuclear localization.

This sequence belongs to the herpesviridae major DNA-binding protein family. Homooligomers. Forms double-helical filaments necessary for the formation of replication compartments within the host nucleus. Interacts with the origin-binding protein. Interacts with the helicase primase complex; this interaction stimulates primer synthesis activity of the helicase-primase complex. Interacts with the DNA polymerase. Interacts with the alkaline exonuclease; this interaction increases its nuclease processivity.

The protein localises to the host nucleus. Its function is as follows. Plays several crucial roles in viral infection. Participates in the opening of the viral DNA origin to initiate replication by interacting with the origin-binding protein. May disrupt loops, hairpins and other secondary structures present on ssDNA to reduce and eliminate pausing of viral DNA polymerase at specific sites during elongation. Promotes viral DNA recombination by performing strand-transfer, characterized by the ability to transfer a DNA strand from a linear duplex to a complementary single-stranded DNA circle. Can also catalyze the renaturation of complementary single strands. Additionally, reorganizes the host cell nucleus, leading to the formation of prereplicative sites and replication compartments. This process is driven by the protein which can form double-helical filaments in the absence of DNA. The sequence is that of Major DNA-binding protein from Amazona oratrix (yellow-headed parrot).